A 123-amino-acid polypeptide reads, in one-letter code: Iron-sulfur cluster insertion protein ErpA (123 aa).

Cysteine 51, cysteine 115, and cysteine 117 together coordinate iron-sulfur cluster.

This sequence belongs to the HesB/IscA family. As to quaternary structure, homodimer. Iron-sulfur cluster is required as a cofactor.

Functionally, required for insertion of 4Fe-4S clusters for at least IspG. This is Iron-sulfur cluster insertion protein ErpA from Halorhodospira halophila (strain DSM 244 / SL1) (Ectothiorhodospira halophila (strain DSM 244 / SL1)).